Here is a 328-residue protein sequence, read N- to C-terminus: Carbonic anhydrase-related protein 11 (328 aa).

The N-terminal stretch at 1–23 (MGAAARLSAPRALVLWAALGAAA) is a signal peptide. The Alpha-carbonic anhydrase domain occupies 33–303 (DWWSYKDNLQ…LAHRALRGNR (271 aa)). Residues N118, N170, and N260 are each glycosylated (N-linked (GlcNAc...) asparagine). The disordered stretch occupies residues 299-328 (LRGNRDPRHPERRCRGPNYRLHVDGAPHGR). Positions 319–328 (LHVDGAPHGR) are enriched in basic and acidic residues.

Belongs to the alpha-carbonic anhydrase family.

The protein resides in the secreted. Functionally, does not have a catalytic activity. This is Carbonic anhydrase-related protein 11 (CA11) from Pongo abelii (Sumatran orangutan).